The chain runs to 328 residues: Glyoxylate reductase/hydroxypyruvate reductase (328 aa).

Position 36 is a phosphoserine (Ser36). Residue 83 to 84 participates in substrate binding; it reads VG. Residues 162 to 164, 185 to 188, Ser217, and Ile243 contribute to the NADP(+) site; these read GRI and RQPR. Residues Arg245, Asp269, and 293–296 contribute to the substrate site; that span reads HIGS. His293 acts as the Proton donor in catalysis. Gly295 contacts NADP(+). Thr298 is subject to Phosphothreonine.

This sequence belongs to the D-isomer specific 2-hydroxyacid dehydrogenase family. As to quaternary structure, homodimer.

The catalysed reaction is glycolate + NADP(+) = glyoxylate + NADPH + H(+). It carries out the reaction (R)-glycerate + NAD(+) = 3-hydroxypyruvate + NADH + H(+). The enzyme catalyses (R)-glycerate + NADP(+) = 3-hydroxypyruvate + NADPH + H(+). Its function is as follows. Enzyme with hydroxy-pyruvate reductase, glyoxylate reductase and D-glycerate dehydrogenase enzymatic activities. Reduces hydroxypyruvate to D-glycerate, glyoxylate to glycolate oxidizes D-glycerate to hydroxypyruvate. The chain is Glyoxylate reductase/hydroxypyruvate reductase (Grhpr) from Mus musculus (Mouse).